Consider the following 263-residue polypeptide: Small ribosomal subunit protein uS2 (263 aa).

The segment at 223 to 246 is disordered; the sequence is KSLLEQDSDANADEAEVSQEEKDA. Over residues 228–240 the composition is skewed to acidic residues; it reads QDSDANADEAEVS.

It belongs to the universal ribosomal protein uS2 family.

The sequence is that of Small ribosomal subunit protein uS2 from Campylobacter curvus (strain 525.92).